We begin with the raw amino-acid sequence, 321 residues long: tRNA-dihydrouridine synthase B (321 aa).

FMN contacts are provided by residues 16–18 and Q70; that span reads PMA. The Proton donor role is filled by C100. FMN-binding positions include K139, 200-202, and 224-225; these read NGD and GR.

The protein belongs to the Dus family. DusB subfamily. Requires FMN as cofactor.

The enzyme catalyses a 5,6-dihydrouridine in tRNA + NAD(+) = a uridine in tRNA + NADH + H(+). The catalysed reaction is a 5,6-dihydrouridine in tRNA + NADP(+) = a uridine in tRNA + NADPH + H(+). In terms of biological role, catalyzes the synthesis of 5,6-dihydrouridine (D), a modified base found in the D-loop of most tRNAs, via the reduction of the C5-C6 double bond in target uridines. This is tRNA-dihydrouridine synthase B from Shigella flexneri.